The following is a 427-amino-acid chain: Actin-related protein 3 (427 aa).

Belongs to the actin family. ARP3 subfamily. Component of the Arp2/3 complex composed of arp2, act2, arc1/p41-ARC, arc2/p34-ARC, arc3/p21-ARC, arc4/p20-ARC and arc5/p16-ARC.

It is found in the cytoplasm. It localises to the cytoskeleton. The protein resides in the actin patch. Its function is as follows. Functions as ATP-binding component of the Arp2/3 complex which is involved in regulation of actin polymerization and together with an activating nucleation-promoting factor (NPF) mediates the formation of branched actin networks. Seems to contact the pointed end of the daughter actin filament. May be involved in cytokinesis. The polypeptide is Actin-related protein 3 (act2) (Schizosaccharomyces pombe (strain 972 / ATCC 24843) (Fission yeast)).